The sequence spans 475 residues: Phosphoglucosamine mutase (475 aa).

The Phosphoserine intermediate role is filled by serine 126. Positions 126, 265, 267, and 269 each coordinate Mg(2+). A Phosphoserine modification is found at serine 126.

The protein belongs to the phosphohexose mutase family. Mg(2+) is required as a cofactor. Activated by phosphorylation.

The enzyme catalyses alpha-D-glucosamine 1-phosphate = D-glucosamine 6-phosphate. Its function is as follows. Catalyzes the conversion of glucosamine-6-phosphate to glucosamine-1-phosphate. This chain is Phosphoglucosamine mutase, found in Synechococcus sp. (strain ATCC 27144 / PCC 6301 / SAUG 1402/1) (Anacystis nidulans).